The primary structure comprises 521 residues: Solute carrier family 35 member F4 (521 aa).

10 helical membrane-spanning segments follow: residues 160–180 (MVLKGIWGLLIILSVSSSWVG), 192–212 (FYCPFFMTWFSTNWNIMFFPV), 248–266 (FLKRTAPFSILWTLTNYLY), 277–297 (DVSALFCCNKAFVFLLSWIVL), 301–321 (FMGVRIVAAIMAITGIVMMAY), 330–350 (IIGVAFAVGSASTSALYKVLF), 365–385 (FVSTLGFFNLIFISFTPVILY), 395–417 (FAALPWGCLCGMAGLWLAFNILV), 419–441 (VGVVLTYPILISIGTVLSVPGNA), and 450–470 (VIFNVVRLAATIIICIGFLLM). One can recognise an EamA domain in the interval 261–321 (LTNYLYLLAL…AITGIVMMAY (61 aa)).

This sequence belongs to the SLC35F solute transporter family.

The protein localises to the membrane. In terms of biological role, putative solute transporter. This chain is Solute carrier family 35 member F4 (SLC35F4), found in Homo sapiens (Human).